The following is a 278-amino-acid chain: BPI fold-containing family A member 1 (278 aa).

A signal peptide spans Met1–Ala19. Repeat repeat units follow at residues Gly23–Leu28, Gln30–Leu36, Gly39–Leu44, and Gly47–Leu52. The 4 X 6 AA repeats of G-[LPQ]-[PL]-L-P-L stretch occupies residues Gly23 to Leu52. Positions Leu112–Leu117 are important for surfactant activity and antibacterial properties. 2 N-linked (GlcNAc...) asparagine glycosylation sites follow: Asn182 and Asn228. A disulfide bridge links Cys204 with Cys246.

Belongs to the BPI/LBP/Plunc superfamily. Plunc family. As to quaternary structure, monomer. Interacts (via N-terminus) with SCNN1B, a subunit of the heterotrimeric epithelial sodium channel (ENaC); this inhibits proteolytic activation of ENaC. As to expression, detected in airway epithelia (trachea and lung) and in bronchoalveolar fluid (at protein level). Upper airways, nasopharyngeal epithelium and thymus. Highest expression in the trachea and progressive decrease from proximal (bronchial) to distal (bronchiolar) airways. No expression is detected in the terminal bronchioles, respiratory bronchioles or lung alveoli.

It localises to the secreted. Its function is as follows. Lipid-binding protein which shows high specificity for the surfactant phospholipid dipalmitoylphosphatidylcholine (DPPC). Plays a role in the innate immune responses of the upper airways. Reduces the surface tension in secretions from airway epithelia and inhibits the formation of biofilm by pathogenic Gram-negative bacteria, such as P.aeruginosa and K.pneumoniae. Negatively regulates proteolytic cleavage of SCNN1G, an event that is required for activation of the epithelial sodium channel (ENaC), and thereby contributes to airway surface liquid homeostasis and proper clearance of mucus. Plays a role in the airway inflammatory response after exposure to irritants. May attract macrophages and neutrophils. The sequence is that of BPI fold-containing family A member 1 (Bpifa1) from Mus musculus (Mouse).